The primary structure comprises 57 residues: UPF0391 membrane protein Smed_4051 (57 aa).

2 helical membrane passes run 4–24 (WALI…SGIS) and 33–53 (ILFY…LAVG).

This sequence belongs to the UPF0391 family.

It localises to the cell membrane. The polypeptide is UPF0391 membrane protein Smed_4051 (Sinorhizobium medicae (strain WSM419) (Ensifer medicae)).